We begin with the raw amino-acid sequence, 445 residues long: N-succinylarginine dihydrolase (445 aa).

Substrate contacts are provided by residues 19–28 (AGLSYGNVAS), Asn-110, and 137–138 (HR). Residue Glu-174 is part of the active site. Arg-214 is a binding site for substrate. His-250 is an active-site residue. Substrate is bound by residues Asp-252 and Asn-363. Residue Cys-369 is the Nucleophile of the active site.

It belongs to the succinylarginine dihydrolase family. Homodimer.

The catalysed reaction is N(2)-succinyl-L-arginine + 2 H2O + 2 H(+) = N(2)-succinyl-L-ornithine + 2 NH4(+) + CO2. Its pathway is amino-acid degradation; L-arginine degradation via AST pathway; L-glutamate and succinate from L-arginine: step 2/5. Catalyzes the hydrolysis of N(2)-succinylarginine into N(2)-succinylornithine, ammonia and CO(2). This Aeromonas hydrophila subsp. hydrophila (strain ATCC 7966 / DSM 30187 / BCRC 13018 / CCUG 14551 / JCM 1027 / KCTC 2358 / NCIMB 9240 / NCTC 8049) protein is N-succinylarginine dihydrolase.